We begin with the raw amino-acid sequence, 453 residues long: Cobyrinate a,c-diamide synthase (453 aa).

The region spanning 250–440 is the GATase cobBQ-type domain; sequence RIAVPFDEAF…IHTHTACLPD (191 aa). Cys332 serves as the catalytic Nucleophile.

This sequence belongs to the CobB/CbiA family. Requires Mg(2+) as cofactor.

It carries out the reaction cob(II)yrinate + 2 L-glutamine + 2 ATP + 2 H2O = cob(II)yrinate a,c diamide + 2 L-glutamate + 2 ADP + 2 phosphate + 2 H(+). The catalysed reaction is Ni-sirohydrochlorin + 2 L-glutamine + 2 ATP + 2 H2O = Ni-sirohydrochlorin a,c-diamide + 2 L-glutamate + 2 ADP + 2 phosphate + 2 H(+). It functions in the pathway cofactor biosynthesis; adenosylcobalamin biosynthesis; cob(II)yrinate a,c-diamide from sirohydrochlorin (anaerobic route): step 10/10. Catalyzes the ATP-dependent amidation of the two carboxylate groups at positions a and c of cobyrinate, using either L-glutamine or ammonia as the nitrogen source. Involved in the biosynthesis of the unique nickel-containing tetrapyrrole coenzyme F430, the prosthetic group of methyl-coenzyme M reductase (MCR), which plays a key role in methanogenesis and anaerobic methane oxidation. Catalyzes the ATP-dependent amidation of the two carboxylate groups at positions a and c of Ni-sirohydrochlorin, using L-glutamine or ammonia as the nitrogen source. In Methanosphaera stadtmanae (strain ATCC 43021 / DSM 3091 / JCM 11832 / MCB-3), this protein is Cobyrinate a,c-diamide synthase.